Reading from the N-terminus, the 137-residue chain is Probable 4-amino-4-deoxy-L-arabinose-phosphoundecaprenol flippase subunit ArnF (137 aa).

At 1 to 5 the chain is on the cytoplasmic side; the sequence is MNVPR. The chain crosses the membrane as a helical span at residues 6-26; that stretch reads GWLAALGSVLLVSAAQLGMRW. At 27–44 the chain is on the periplasmic side; that stretch reads GMSRLPLPEAWAGQTPEH. A helical transmembrane segment spans residues 45–65; that stretch reads AALLAVALAVAAYAASLLCWL. Topologically, residues 66–76 are cytoplasmic; the sequence is AALRHLPLGRA. Residues 77–97 form a helical membrane-spanning segment; the sequence is YSLLSASYALVYLLAASLPAF. Over 98-100 the chain is Periplasmic; that stretch reads EET. Residues 101 to 121 traverse the membrane as a helical segment; the sequence is FTTGKTLGVGLVVLGVLTVNA. Over 122 to 137 the chain is Cytoplasmic; sequence RRTAAAPAHHPSRKAL.

It belongs to the ArnF family. In terms of assembly, heterodimer of ArnE and ArnF.

The protein localises to the cell inner membrane. The protein operates within bacterial outer membrane biogenesis; lipopolysaccharide biosynthesis. Functionally, translocates 4-amino-4-deoxy-L-arabinose-phosphoundecaprenol (alpha-L-Ara4N-phosphoundecaprenol) from the cytoplasmic to the periplasmic side of the inner membrane. The protein is Probable 4-amino-4-deoxy-L-arabinose-phosphoundecaprenol flippase subunit ArnF of Pseudomonas paraeruginosa (strain DSM 24068 / PA7) (Pseudomonas aeruginosa (strain PA7)).